The sequence spans 253 residues: Purine nucleoside phosphorylase DR_1966 (253 aa).

Residues His-72, Cys-106, and His-123 each contribute to the Zn(2+) site.

It belongs to the purine nucleoside phosphorylase YfiH/LACC1 family. Homodimer. It depends on Cu(2+) as a cofactor. Requires Zn(2+) as cofactor.

The enzyme catalyses adenosine + phosphate = alpha-D-ribose 1-phosphate + adenine. It catalyses the reaction S-methyl-5'-thioadenosine + phosphate = 5-(methylsulfanyl)-alpha-D-ribose 1-phosphate + adenine. It carries out the reaction inosine + phosphate = alpha-D-ribose 1-phosphate + hypoxanthine. The catalysed reaction is adenosine + H2O + H(+) = inosine + NH4(+). Functionally, purine nucleoside enzyme that catalyzes the phosphorolysis of adenosine and inosine nucleosides, yielding D-ribose 1-phosphate and the respective free bases, adenine and hypoxanthine. Also catalyzes the phosphorolysis of S-methyl-5'-thioadenosine into adenine and S-methyl-5-thio-alpha-D-ribose 1-phosphate. Also has adenosine deaminase activity. The chain is Purine nucleoside phosphorylase DR_1966 from Deinococcus radiodurans (strain ATCC 13939 / DSM 20539 / JCM 16871 / CCUG 27074 / LMG 4051 / NBRC 15346 / NCIMB 9279 / VKM B-1422 / R1).